We begin with the raw amino-acid sequence, 760 residues long: Catecholate siderophore receptor Fiu (760 aa).

Residues 1 to 31 (MENNRNFPARQFHSLTFFAGLCIGITPVAQA) form the signal peptide. The region spanning 67–175 (PVADTTRTMT…PTGSINMISK (109 aa)) is the TBDR plug domain. Positions 180 to 760 (DSGIDASASI…TFLLTANMHF (581 aa)) constitute a TBDR beta-barrel domain. Positions 743-760 (RYHPGEPRTFLLTANMHF) match the TonB C-terminal box motif.

The protein belongs to the TonB-dependent receptor family.

The protein localises to the cell outer membrane. Involved in the active transport across the outer membrane of iron complexed with catecholate siderophores such as dihydroxybenzoylserine and dihydroxybenzoate. It derives its energy for transport by interacting with the trans-periplasmic membrane protein TonB. Can also transport catechol-substituted cephalosporins. Receptor for microcins M, H47 and E492. This chain is Catecholate siderophore receptor Fiu (fiu), found in Escherichia coli (strain UTI89 / UPEC).